Reading from the N-terminus, the 298-residue chain is Trimeric intracellular cation channel type A (298 aa).

Residues 1 to 18 lie on the Lumenal side of the membrane; the sequence is MDLMSALSLGELALSFSR. Residues 19–39 traverse the membrane as a helical segment; it reads VPLFPVFDLSYFIVSIIYLKY. Residues 40 to 51 lie on the Cytoplasmic side of the membrane; it reads EPGAVELSRRHP. Residues 52-72 traverse the membrane as a helical segment; that stretch reads VASWLCAMLHCFGSYILADLL. The Lumenal portion of the chain corresponds to 73–85; sequence LGEPIIDYFSNSS. Gly-74 is a binding site for Ca(2+). Residues 86 to 106 form a helical membrane-spanning segment; it reads SILLASGVWYLIFFCPLDLFY. The Cytoplasmic portion of the chain corresponds to 107 to 144; it reads KCVCFLPVKLIFVAMKEVVRVRKIAVGIHHAHHHYHHG. Lys-122 and Arg-126 together coordinate a 1,2-diacyl-sn-glycero-3-phospho-(1D-myo-inositol-4,5-bisphosphate). Residues 145–165 form a helical membrane-spanning segment; it reads WFIMIATGWVKGSGVALLSNV. Topologically, residues 166-178 are lumenal; it reads EQLLRGVWKPETN. The chain crosses the membrane as a helical span at residues 179-199; it reads EILHMSFPTKASLYGAILFTL. The Cytoplasmic segment spans residues 200–209; the sequence is QQTRWLPVSK. Residues 210-230 traverse the membrane as a helical segment; sequence ASLIFVFTMFMVSCKVFLTAT. Residues 231-234 are Lumenal-facing; sequence HSHS. The chain crosses the membrane as a helical span at residues 235-255; the sequence is SPFDILEGYICPVLFGATWGG. The Cytoplasmic portion of the chain corresponds to 256 to 298; it reads DHHHDNHGAPHGMGLGTQHSGLPAKAKEELGEGSRKKKTKKAD. The tract at residues 260-298 is disordered; the sequence is DNHGAPHGMGLGTQHSGLPAKAKEELGEGSRKKKTKKAD. Basic and acidic residues predominate over residues 280–289; that stretch reads KAKEELGEGS.

Belongs to the TMEM38 family. As to quaternary structure, homotrimer; conformation seems to be controled by binding to diacylglycerol (DAG). As to expression, expressed at high levels in heart and striated muscle. Also detected in brain, lung and kidney.

It is found in the sarcoplasmic reticulum membrane. Its subcellular location is the nucleus membrane. It carries out the reaction K(+)(in) = K(+)(out). With respect to regulation, channel activity is activated by a change of voltage within the sarcoplasmic reticulum lumen and blocked by luminal high Ca(2+) levels. Functionally, intracellular monovalent cation channel required for maintenance of rapid intracellular calcium release. Acts as a potassium counter-ion channel that functions in synchronization with calcium release from intracellular stores. Opened by a change of voltage within the sarcoplasmic reticulum lumen. In Mus musculus (Mouse), this protein is Trimeric intracellular cation channel type A (Tmem38a).